Reading from the N-terminus, the 158-residue chain is Urease accessory protein UreE (158 aa).

Positions 133-158 (PEGGAYQAHSHDGHSHHQGHTHDHHD) are disordered. Residues 141–158 (HSHDGHSHHQGHTHDHHD) show a composition bias toward basic and acidic residues.

This sequence belongs to the UreE family.

It localises to the cytoplasm. Functionally, involved in urease metallocenter assembly. Binds nickel. Probably functions as a nickel donor during metallocenter assembly. The polypeptide is Urease accessory protein UreE (Chelativorans sp. (strain BNC1)).